Here is a 239-residue protein sequence, read N- to C-terminus: Homeobox protein Nkx-2.8 (239 aa).

Polar residues predominate over residues 1–11 (MATSGRLSFTV). Positions 1 to 87 (MATSGRLSFT…GSDAEKRKKR (87 aa)) are disordered. The span at 21–32 (DAQHLPRREPEP) shows a compositional bias: basic and acidic residues. Low complexity predominate over residues 62 to 79 (SPPDSSQRPSARPASPGS). Positions 84 to 143 (RKKRRVLFSKAQTLELERRFRQQRYLSAPEREQLASLLRLTPTQVKIWFQNHRYKLKRAR) form a DNA-binding region, homeobox.

It belongs to the NK-2 homeobox family.

The protein resides in the nucleus. This Homo sapiens (Human) protein is Homeobox protein Nkx-2.8 (NKX2-8).